The following is a 334-amino-acid chain: Cobalt-precorrin-5B C(1)-methyltransferase (334 aa).

Belongs to the CbiD family.

It carries out the reaction Co-precorrin-5B + S-adenosyl-L-methionine = Co-precorrin-6A + S-adenosyl-L-homocysteine. Its pathway is cofactor biosynthesis; adenosylcobalamin biosynthesis; cob(II)yrinate a,c-diamide from sirohydrochlorin (anaerobic route): step 6/10. Catalyzes the methylation of C-1 in cobalt-precorrin-5B to form cobalt-precorrin-6A. This is Cobalt-precorrin-5B C(1)-methyltransferase from Methanoregula boonei (strain DSM 21154 / JCM 14090 / 6A8).